Consider the following 668-residue polypeptide: tRNA 5-methylaminomethyl-2-thiouridine biosynthesis bifunctional protein MnmC (668 aa).

Positions methionine 1–glutamate 245 are tRNA (mnm(5)s(2)U34)-methyltransferase. The interval isoleucine 270–glycine 668 is FAD-dependent cmnm(5)s(2)U34 oxidoreductase.

It in the N-terminal section; belongs to the methyltransferase superfamily. tRNA (mnm(5)s(2)U34)-methyltransferase family. The protein in the C-terminal section; belongs to the DAO family. FAD serves as cofactor.

The protein resides in the cytoplasm. It catalyses the reaction 5-aminomethyl-2-thiouridine(34) in tRNA + S-adenosyl-L-methionine = 5-methylaminomethyl-2-thiouridine(34) in tRNA + S-adenosyl-L-homocysteine + H(+). Catalyzes the last two steps in the biosynthesis of 5-methylaminomethyl-2-thiouridine (mnm(5)s(2)U) at the wobble position (U34) in tRNA. Catalyzes the FAD-dependent demodification of cmnm(5)s(2)U34 to nm(5)s(2)U34, followed by the transfer of a methyl group from S-adenosyl-L-methionine to nm(5)s(2)U34, to form mnm(5)s(2)U34. This Escherichia coli (strain SMS-3-5 / SECEC) protein is tRNA 5-methylaminomethyl-2-thiouridine biosynthesis bifunctional protein MnmC.